Here is a 536-residue protein sequence, read N- to C-terminus: MFS-type efflux pump MFS1 (536 aa).

3 helical membrane passes run V30–A50, Y80–V100, and W102–P122. N123 is a glycosylation site (N-linked (GlcNAc...) asparagine). The next 3 helical transmembrane spans lie at V133–I153, G163–F183, and W191–L211. N221 is a glycosylation site (N-linked (GlcNAc...) asparagine). Transmembrane regions (helical) follow at residues I234–G254, I264–R284, F306–F326, I342–I362, A366–F386, I400–V420, V426–S446, and T503–W523.

The protein belongs to the major facilitator superfamily. TCR/Tet family.

It localises to the cell membrane. Its function is as follows. MFS-type efflux pump involved in the modulation susceptibility to azoles, including fluconazole, itraconazole, ketoconazole, miconazole and voriconazole. Confers also increased resistance chloramphenicol and thiamphenicol, suggesting that it acts as a pleiotropic drug transporter with a broad substrate spectrum. Finally, increases the tolerance to cycloheximide when expressed in S.cerevisiae, but not in dermatophyte species. This chain is MFS-type efflux pump MFS1, found in Trichophyton rubrum (strain ATCC MYA-4607 / CBS 118892) (Athlete's foot fungus).